The sequence spans 633 residues: E3 ubiquitin-protein ligase ZSWIM2 (633 aa).

Residues 54–87 form an SWIM-type zinc finger; it reads FRVFLGNPHVCNCSTFPKGGELCKHICWVLLKKF. The segment at 147-198 adopts an RING-type 1 zinc-finger fold; sequence CSICQELLLEKKLPVTFCRFGCGNSIHIKCMKILANYQSTSNTSMLKCPLCR. A ZZ-type zinc finger spans residues 229–280; the sequence is HLGIPCNNCKQFPIEGKCYKCTECIEYHLCQECFDSCCHLSHTFTFREKRNQ. 8 residues coordinate Zn(2+): cysteine 234, cysteine 237, cysteine 249, cysteine 252, cysteine 258, cysteine 261, histidine 267, and histidine 270. The RING-type 2 zinc-finger motif lies at 344-388; sequence CLLCLKAFHLGQHTRLLPCTHKFHRKCIDNWLFHKCNSCPIDGQV.

As to quaternary structure, dimer. Interacts with UBE2D1. Polyubiquitinated. Polyubiquitination is followed by degradation via the proteasome. In terms of tissue distribution, expression is testis-specific.

It carries out the reaction S-ubiquitinyl-[E2 ubiquitin-conjugating enzyme]-L-cysteine + [acceptor protein]-L-lysine = [E2 ubiquitin-conjugating enzyme]-L-cysteine + N(6)-ubiquitinyl-[acceptor protein]-L-lysine.. Its function is as follows. E3 ubiquitin-protein ligase involved in the regulation of Fas-, DR3- and DR4-mediated apoptosis. Functions in conjunction with the UBE2D1, UBE2D3 and UBE2E1 E2 ubiquitin-conjugating enzymes. The protein is E3 ubiquitin-protein ligase ZSWIM2 of Homo sapiens (Human).